A 692-amino-acid polypeptide reads, in one-letter code: DNA ligase (692 aa).

Residues 35 to 39 (DLVYD), 88 to 89 (SL), and Glu-117 each bind NAD(+). Lys-119 acts as the N6-AMP-lysine intermediate in catalysis. Residues Arg-140, Glu-176, Lys-301, and Lys-325 each contribute to the NAD(+) site. Zn(2+) contacts are provided by Cys-416, Cys-419, Cys-434, and Cys-439. In terms of domain architecture, BRCT spans 611–692 (LTNQSNSWAS…FDLIKNSKKT (82 aa)).

This sequence belongs to the NAD-dependent DNA ligase family. LigA subfamily. Requires Mg(2+) as cofactor. Mn(2+) is required as a cofactor.

It catalyses the reaction NAD(+) + (deoxyribonucleotide)n-3'-hydroxyl + 5'-phospho-(deoxyribonucleotide)m = (deoxyribonucleotide)n+m + AMP + beta-nicotinamide D-nucleotide.. Its function is as follows. DNA ligase that catalyzes the formation of phosphodiester linkages between 5'-phosphoryl and 3'-hydroxyl groups in double-stranded DNA using NAD as a coenzyme and as the energy source for the reaction. It is essential for DNA replication and repair of damaged DNA. This chain is DNA ligase, found in Mesomycoplasma hyopneumoniae (strain 232) (Mycoplasma hyopneumoniae).